Here is a 213-residue protein sequence, read N- to C-terminus: Imidazole glycerol phosphate synthase subunit HisH (213 aa).

A Glutamine amidotransferase type-1 domain is found at 1-212; the sequence is MLAILDYKAG…HRYCTEAADA (212 aa). The active-site Nucleophile is cysteine 79. Catalysis depends on residues histidine 187 and glutamate 189.

Heterodimer of HisH and HisF.

It is found in the cytoplasm. The enzyme catalyses 5-[(5-phospho-1-deoxy-D-ribulos-1-ylimino)methylamino]-1-(5-phospho-beta-D-ribosyl)imidazole-4-carboxamide + L-glutamine = D-erythro-1-(imidazol-4-yl)glycerol 3-phosphate + 5-amino-1-(5-phospho-beta-D-ribosyl)imidazole-4-carboxamide + L-glutamate + H(+). It catalyses the reaction L-glutamine + H2O = L-glutamate + NH4(+). Its pathway is amino-acid biosynthesis; L-histidine biosynthesis; L-histidine from 5-phospho-alpha-D-ribose 1-diphosphate: step 5/9. Functionally, IGPS catalyzes the conversion of PRFAR and glutamine to IGP, AICAR and glutamate. The HisH subunit catalyzes the hydrolysis of glutamine to glutamate and ammonia as part of the synthesis of IGP and AICAR. The resulting ammonia molecule is channeled to the active site of HisF. In Nitratidesulfovibrio vulgaris (strain DP4) (Desulfovibrio vulgaris), this protein is Imidazole glycerol phosphate synthase subunit HisH.